Consider the following 157-residue polypeptide: Molybdopterin synthase catalytic subunit (157 aa).

Substrate is bound by residues 103-104 (HR), Lys-119, and 126-128 (KKE).

The protein belongs to the MoaE family. MOCS2B subfamily. Heterotetramer; composed of 2 small (MOCS2A) and 2 large (MOCS2B) subunits.

Its subcellular location is the cytoplasm. It catalyses the reaction 2 [molybdopterin-synthase sulfur-carrier protein]-C-terminal-Gly-aminoethanethioate + cyclic pyranopterin phosphate + H2O = molybdopterin + 2 [molybdopterin-synthase sulfur-carrier protein]-C-terminal Gly-Gly + 2 H(+). It functions in the pathway cofactor biosynthesis; molybdopterin biosynthesis. In terms of biological role, catalytic subunit of the molybdopterin synthase complex, a complex that catalyzes the conversion of precursor Z into molybdopterin. Acts by mediating the incorporation of 2 sulfur atoms from thiocarboxylated MOCS2A into precursor Z to generate a dithiolene group. This chain is Molybdopterin synthase catalytic subunit, found in Culex quinquefasciatus (Southern house mosquito).